The primary structure comprises 162 residues: Interleukin-15 (162 aa).

The signal sequence occupies residues 1 to 29; the sequence is MRISKPHLRSVSIQCYLCLLLNSHFLTEA. Positions 30 to 48 are excised as a propeptide; that stretch reads GIHVFILGCFSAGLPKTEA. Intrachain disulfides connect Cys83-Cys133 and Cys90-Cys136. Asn127 carries N-linked (GlcNAc...) asparagine glycosylation.

This sequence belongs to the IL-15/IL-21 family.

It is found in the secreted. Functionally, cytokine that plays a major role in the development of inflammatory and protective immune responses to microbial invaders and parasites by modulating immune cells of both the innate and adaptive immune systems. Stimulates the proliferation of natural killer cells, T-cells and B-cells and promotes the secretion of several cytokines. In monocytes, induces the production of IL8 and monocyte chemotactic protein 1/CCL2, two chemokines that attract neutrophils and monocytes respectively to sites of infection. Unlike most cytokines, which are secreted in soluble form, IL15 is expressed in association with its high affinity IL15RA on the surface of IL15-producing cells and delivers signals to target cells that express IL2RB and IL2RG receptor subunits. Binding to its receptor triggers the phosphorylation of JAK1 and JAK3 and the recruitment and subsequent phosphorylation of signal transducer and activator of transcription-3/STAT3 and STAT5. In mast cells, induces the rapid tyrosine phosphorylation of STAT6 and thereby controls mast cell survival and release of cytokines such as IL4. The polypeptide is Interleukin-15 (IL15) (Macaca thibetana (Pere David's macaque)).